The sequence spans 428 residues: 26S proteasome regulatory subunit 7 (428 aa).

211-218 (GPPGTGKT) is a binding site for ATP.

It belongs to the AAA ATPase family.

The protein resides in the cytoplasm. It is found in the nucleus. The 26S proteasome is involved in the ATP-dependent degradation of ubiquitinated proteins. The regulatory (or ATPase) complex confers ATP dependency and substrate specificity to the 26S complex. This Dictyostelium discoideum (Social amoeba) protein is 26S proteasome regulatory subunit 7 (psmC2).